A 624-amino-acid chain; its full sequence is 1-deoxy-D-xylulose-5-phosphate synthase (624 aa).

Residues His-74 and 115–117 (GHS) contribute to the thiamine diphosphate site. Asp-146 lines the Mg(2+) pocket. Residues 147–148 (GA), Asn-175, Tyr-286, and Glu-367 contribute to the thiamine diphosphate site. Asn-175 is a Mg(2+) binding site.

This sequence belongs to the transketolase family. DXPS subfamily. As to quaternary structure, homodimer. Mg(2+) is required as a cofactor. Thiamine diphosphate serves as cofactor.

The catalysed reaction is D-glyceraldehyde 3-phosphate + pyruvate + H(+) = 1-deoxy-D-xylulose 5-phosphate + CO2. It participates in metabolic intermediate biosynthesis; 1-deoxy-D-xylulose 5-phosphate biosynthesis; 1-deoxy-D-xylulose 5-phosphate from D-glyceraldehyde 3-phosphate and pyruvate: step 1/1. Functionally, catalyzes the acyloin condensation reaction between C atoms 2 and 3 of pyruvate and glyceraldehyde 3-phosphate to yield 1-deoxy-D-xylulose-5-phosphate (DXP). The chain is 1-deoxy-D-xylulose-5-phosphate synthase from Alkaliphilus oremlandii (strain OhILAs) (Clostridium oremlandii (strain OhILAs)).